A 152-amino-acid chain; its full sequence is SsrA-binding protein (152 aa).

The protein belongs to the SmpB family.

It is found in the cytoplasm. Required for rescue of stalled ribosomes mediated by trans-translation. Binds to transfer-messenger RNA (tmRNA), required for stable association of tmRNA with ribosomes. tmRNA and SmpB together mimic tRNA shape, replacing the anticodon stem-loop with SmpB. tmRNA is encoded by the ssrA gene; the 2 termini fold to resemble tRNA(Ala) and it encodes a 'tag peptide', a short internal open reading frame. During trans-translation Ala-aminoacylated tmRNA acts like a tRNA, entering the A-site of stalled ribosomes, displacing the stalled mRNA. The ribosome then switches to translate the ORF on the tmRNA; the nascent peptide is terminated with the 'tag peptide' encoded by the tmRNA and targeted for degradation. The ribosome is freed to recommence translation, which seems to be the essential function of trans-translation. The chain is SsrA-binding protein from Persephonella marina (strain DSM 14350 / EX-H1).